Here is a 198-residue protein sequence, read N- to C-terminus: Ribonuclease HII (198 aa).

Residues 6-195 (RRVAGVDEVG…VHHMLYQDKN (190 aa)) form the RNase H type-2 domain. A divalent metal cation contacts are provided by Asp12, Glu13, and Asp103.

It belongs to the RNase HII family. Requires Mn(2+) as cofactor. Mg(2+) is required as a cofactor.

The protein resides in the cytoplasm. The catalysed reaction is Endonucleolytic cleavage to 5'-phosphomonoester.. Functionally, endonuclease that specifically degrades the RNA of RNA-DNA hybrids. This is Ribonuclease HII from Roseobacter denitrificans (strain ATCC 33942 / OCh 114) (Erythrobacter sp. (strain OCh 114)).